Consider the following 269-residue polypeptide: MRVAIYHSSDEHSIQVGKDLAKILSQNEIVIDNEKPTVVITIGGDGTLLSAVQKYLNLLEEVRFVGVHTGHLGFYTDWREYELETLVKALKSDGGAEVSYPLLNIDVTHTDGSHISYKAVNESTLRKLSGTMVADVLIGDNLFERFRGDGLCISTPTGSTAYNRSVGGAIVHPRLEVLQMAEIASINNRVFRTVGASLIMAPNETITIRPVPSFHRTYNFTADRIDLLDKHVKEVHYSIDEQKVKFLKYRHTGFWNRVRNSFIGSIDEV.

Catalysis depends on D45, which acts as the Proton acceptor. Residues 45–46 (DG), 121–122 (NE), R147, D149, 160–165 (TAYNRS), and A184 each bind NAD(+).

It belongs to the NAD kinase family. A divalent metal cation is required as a cofactor.

It is found in the cytoplasm. It carries out the reaction NAD(+) + ATP = ADP + NADP(+) + H(+). Functionally, involved in the regulation of the intracellular balance of NAD and NADP, and is a key enzyme in the biosynthesis of NADP. Catalyzes specifically the phosphorylation on 2'-hydroxyl of the adenosine moiety of NAD to yield NADP. This Pediococcus pentosaceus (strain ATCC 25745 / CCUG 21536 / LMG 10740 / 183-1w) protein is NAD kinase.